The chain runs to 337 residues: Ferrochelatase (337 aa).

Residues His-189 and Glu-293 each contribute to the Fe cation site.

The protein belongs to the ferrochelatase family.

Its subcellular location is the cytoplasm. It carries out the reaction heme b + 2 H(+) = protoporphyrin IX + Fe(2+). It functions in the pathway porphyrin-containing compound metabolism; protoheme biosynthesis; protoheme from protoporphyrin-IX: step 1/1. Its function is as follows. Catalyzes the ferrous insertion into protoporphyrin IX. This is Ferrochelatase from Pseudomonas entomophila (strain L48).